The primary structure comprises 580 residues: Pentatricopeptide repeat-containing protein At5g10690 (580 aa).

9 PPR repeats span residues 76-110, 112-142, 151-181, 189-223, 224-254, 266-296, 302-337, 342-376, and 382-417; these read NTIV…GGIG, DSIS…IEYG, SSSL…YDIL, SVLI…RLEP, DRLT…MKEK, DVVT…MKLC, DRTA…GANE, KPHL…SSGS, and QQEA…KTIP. A CBS domain is found at 486–553; sequence VPIVDDRGSC…IVVHCGNFSG (68 aa).

The protein belongs to the PPR family. P subfamily.

The sequence is that of Pentatricopeptide repeat-containing protein At5g10690 (CBSPPR1) from Arabidopsis thaliana (Mouse-ear cress).